The following is a 297-amino-acid chain: tRNA-cytidine(32) 2-sulfurtransferase (297 aa).

Positions 45-50 (SGGKDS) match the PP-loop motif motif. Residues Cys-120, Cys-123, and Cys-211 each contribute to the [4Fe-4S] cluster site.

Belongs to the TtcA family. In terms of assembly, homodimer. Requires Mg(2+) as cofactor. [4Fe-4S] cluster serves as cofactor.

It is found in the cytoplasm. It carries out the reaction cytidine(32) in tRNA + S-sulfanyl-L-cysteinyl-[cysteine desulfurase] + AH2 + ATP = 2-thiocytidine(32) in tRNA + L-cysteinyl-[cysteine desulfurase] + A + AMP + diphosphate + H(+). It functions in the pathway tRNA modification. Catalyzes the ATP-dependent 2-thiolation of cytidine in position 32 of tRNA, to form 2-thiocytidine (s(2)C32). The sulfur atoms are provided by the cysteine/cysteine desulfurase (IscS) system. This chain is tRNA-cytidine(32) 2-sulfurtransferase, found in Vibrio campbellii (strain ATCC BAA-1116).